Consider the following 239-residue polypeptide: Ribonuclease PH (239 aa).

Phosphate is bound by residues Arg86 and 124–126 (GTR).

This sequence belongs to the RNase PH family. As to quaternary structure, homohexameric ring arranged as a trimer of dimers.

The enzyme catalyses tRNA(n+1) + phosphate = tRNA(n) + a ribonucleoside 5'-diphosphate. In terms of biological role, phosphorolytic 3'-5' exoribonuclease that plays an important role in tRNA 3'-end maturation. Removes nucleotide residues following the 3'-CCA terminus of tRNAs; can also add nucleotides to the ends of RNA molecules by using nucleoside diphosphates as substrates, but this may not be physiologically important. Probably plays a role in initiation of 16S rRNA degradation (leading to ribosome degradation) during starvation. The protein is Ribonuclease PH of Azoarcus sp. (strain BH72).